Here is a 225-residue protein sequence, read N- to C-terminus: UPF0173 metal-dependent hydrolase PAE2160 (225 aa).

Belongs to the UPF0173 family.

In Pyrobaculum aerophilum (strain ATCC 51768 / DSM 7523 / JCM 9630 / CIP 104966 / NBRC 100827 / IM2), this protein is UPF0173 metal-dependent hydrolase PAE2160.